The chain runs to 78 residues: Probable Fe(2+)-trafficking protein (78 aa).

It belongs to the Fe(2+)-trafficking protein family. Monomer.

Its function is as follows. Could be a mediator in iron transactions between iron acquisition and iron-requiring processes, such as synthesis and/or repair of Fe-S clusters in biosynthetic enzymes. The protein is Probable Fe(2+)-trafficking protein of Wigglesworthia glossinidia brevipalpis.